The sequence spans 578 residues: Octopamine receptor 2 (578 aa).

Over Met1 to Val84 the chain is Extracellular. Asn13, Asn38, Asn46, and Asn59 each carry an N-linked (GlcNAc...) asparagine glycan. Residues Ala85–Tyr107 form a helical membrane-spanning segment. Residues Arg108–Asn117 lie on the Cytoplasmic side of the membrane. Residues Cys118 to Thr139 form a helical membrane-spanning segment. Topologically, residues Val140 to Leu156 are extracellular. A disulfide bridge connects residues Cys154 and Cys239. The chain crosses the membrane as a helical span at residues Trp157 to Phe177. Topologically, residues Asp178 to Lys197 are cytoplasmic. The helical transmembrane segment at Ala198 to Trp220 threads the bilayer. Residues Gln221–Ser251 are Extracellular-facing. Asn231 carries an N-linked (GlcNAc...) asparagine glycan. Residues Ser252–Val272 form a helical membrane-spanning segment. The Cytoplasmic portion of the chain corresponds to Val273–Arg495. Residues Met496–Arg517 traverse the membrane as a helical segment. The Extracellular segment spans residues Ser518–Ala531. Residues Ala532–Asp553 form a helical membrane-spanning segment. Residues Asp554 to Arg578 are Cytoplasmic-facing.

The protein belongs to the G-protein coupled receptor 1 family.

It is found in the cell membrane. In terms of biological role, receptor for octopamine. Octopamine (OA) is a neurotransmitter, neurohormone, and neuromodulator in invertebrates. This receptor induces a long lasting opening of voltage- independent chloride channels, a process which seems to involve protein phosphorylation but does not require either cAPK or PKC. The rank order of potency for agonists is p-synephrine &gt; p-octopamine &gt; xylometazoline &gt; B-HT920 &gt; norepinephrine = clonidine &gt; epinephrine &gt; p-tyramine &gt; phenylephrine = oxymetazoline = mehoxamine = dopamine &gt; serotonin &gt; histamine. For antagonists, the rank order is rauwolscine = mianserin &gt; phentolamine &gt; chlorpromazine &gt; spiperone &gt; yohimbine &gt; propanolol &gt; alprenolol &gt; prazosine &gt; pindolol. The chain is Octopamine receptor 2 from Lymnaea stagnalis (Great pond snail).